A 380-amino-acid chain; its full sequence is 3-dehydroquinate synthase (380 aa).

NAD(+) is bound by residues 118–122, 142–143, K155, and K164; these read GVIGD and TS. E197, H259, and H278 together coordinate Zn(2+).

The protein belongs to the sugar phosphate cyclases superfamily. Dehydroquinate synthase family. Requires Co(2+) as cofactor. It depends on Zn(2+) as a cofactor. NAD(+) is required as a cofactor.

Its subcellular location is the cytoplasm. It carries out the reaction 7-phospho-2-dehydro-3-deoxy-D-arabino-heptonate = 3-dehydroquinate + phosphate. The protein operates within metabolic intermediate biosynthesis; chorismate biosynthesis; chorismate from D-erythrose 4-phosphate and phosphoenolpyruvate: step 2/7. Its function is as follows. Catalyzes the conversion of 3-deoxy-D-arabino-heptulosonate 7-phosphate (DAHP) to dehydroquinate (DHQ). The chain is 3-dehydroquinate synthase from Sinorhizobium medicae (strain WSM419) (Ensifer medicae).